The chain runs to 675 residues: Regulator of G-protein signaling 9 (675 aa).

In terms of domain architecture, DEP spans 30–105; that stretch reads PETGVRMHNQ…PDSSLYRFQT (76 aa). The G protein gamma domain maps to 222–283; sequence VRKEIMYYQQ…DTQFWDLNAK (62 aa). The RGS domain maps to 299 to 414; the sequence is NFSELIRDPK…LKSPIYKEML (116 aa). 2 disordered regions span residues 524-571 and 637-662; these read RVAL…PPKA and DSGTCLMDSDDPRAGESGDQTTEKEV. The span at 542–551 shows a compositional bias: polar residues; the sequence is SGANSGPSVT. 2 stretches are compositionally biased toward basic and acidic residues: residues 552 to 562 and 646 to 662; these read ENREPSADHSR and DDPRAGESGDQTTEKEV.

As to quaternary structure, heterodimer with GNB5. Interacts with RGS7BP, leading to regulate the subcellular location of the heterodimer formed with GNB5. Component of the RGS9-1-Gbeta5 complex composed of RGS9 (RGS9-1), Gbeta5 (GNB5) and RGS9BP. Interacts with PDE6G and GNAT1. Retinal isoform 1 is light-dependent phosphorylated at 'Ser-475'. Phosphorylation is decreased by light exposition. Interaction with RGS9BP is decreased when isoform 1 is phosphorylated at 'Ser-475'. As to expression, isoform 1 is expressed in photoreceptor outer segments. Isoform 2 is expressed in brain striatum.

The protein localises to the membrane. Functionally, inhibits signal transduction by increasing the GTPase activity of G protein alpha subunits thereby driving them into their inactive GDP-bound form. Binds to GNAT1. Involved in phototransduction; key element in the recovery phase of visual transduction. The chain is Regulator of G-protein signaling 9 (Rgs9) from Mus musculus (Mouse).